A 127-amino-acid chain; its full sequence is Large ribosomal subunit protein bL20 (127 aa).

It belongs to the bacterial ribosomal protein bL20 family.

In terms of biological role, binds directly to 23S ribosomal RNA and is necessary for the in vitro assembly process of the 50S ribosomal subunit. It is not involved in the protein synthesizing functions of that subunit. This chain is Large ribosomal subunit protein bL20, found in Bifidobacterium longum (strain NCC 2705).